Reading from the N-terminus, the 618-residue chain is Probable protein disulfide-isomerase A4 (618 aa).

Positions 1–21 are cleaved as a signal peptide; it reads MMFDRRFFALVVLLCVSAVRS. Thioredoxin domains follow at residues 22–139, 138–254, and 480–609; these read TEDA…SRVD, VDPN…DQSK, and SSGK…KHGV. 3 disulfides stabilise this stretch: Cys65-Cys68, Cys176-Cys179, and Cys529-Cys532. Residues 615-618 carry the Prevents secretion from ER motif; the sequence is KDEL.

This sequence belongs to the protein disulfide isomerase family.

It is found in the endoplasmic reticulum lumen. The catalysed reaction is Catalyzes the rearrangement of -S-S- bonds in proteins.. The protein is Probable protein disulfide-isomerase A4 of Caenorhabditis elegans.